Consider the following 283-residue polypeptide: S-methyl-5'-thioadenosine phosphorylase (283 aa).

Thr18 lines the phosphate pocket. Lys51 carries the N6-acetyllysine modification. Phosphate is bound by residues 60–61 (RH) and 93–94 (TA). Met196 is a binding site for substrate. Thr197 serves as a coordination point for phosphate. 220 to 222 (DYD) contributes to the substrate binding site.

This sequence belongs to the PNP/MTAP phosphorylase family. MTAP subfamily. Homotrimer.

The protein resides in the cytoplasm. It is found in the nucleus. It catalyses the reaction S-methyl-5'-thioadenosine + phosphate = 5-(methylsulfanyl)-alpha-D-ribose 1-phosphate + adenine. It functions in the pathway amino-acid biosynthesis; L-methionine biosynthesis via salvage pathway; S-methyl-5-thio-alpha-D-ribose 1-phosphate from S-methyl-5'-thioadenosine (phosphorylase route): step 1/1. Its function is as follows. Catalyzes the reversible phosphorylation of S-methyl-5'-thioadenosine (MTA) to adenine and 5-methylthioribose-1-phosphate. Involved in the breakdown of MTA, a major by-product of polyamine biosynthesis. Responsible for the first step in the methionine salvage pathway after MTA has been generated from S-adenosylmethionine. Has broad substrate specificity with 6-aminopurine nucleosides as preferred substrates. This is S-methyl-5'-thioadenosine phosphorylase from Bos taurus (Bovine).